Consider the following 209-residue polypeptide: Fibroblast growth factor 10 (209 aa).

The signal sequence occupies residues 1–36; the sequence is MWKWILTHCASAFPHLPGCCCCFLLLFLVSSFPVTC. N50 and N197 each carry an N-linked (GlcNAc...) asparagine glycan.

This sequence belongs to the heparin-binding growth factors family. In terms of assembly, interacts with FGFR1 and FGFR2. Interacts with FGFBP1. As to expression, expressed abundantly in embryos and the lung, and at much lower levels in brain and heart.

The protein localises to the secreted. Its function is as follows. Plays an important role in the regulation of embryonic development, cell proliferation and cell differentiation. Required for normal branching morphogenesis. May play a role in wound healing. This Mus musculus (Mouse) protein is Fibroblast growth factor 10 (Fgf10).